An 879-amino-acid polypeptide reads, in one-letter code: Alanine--tRNA ligase (879 aa).

Zn(2+)-binding residues include His-565, His-569, Cys-674, and His-678.

The protein belongs to the class-II aminoacyl-tRNA synthetase family. It depends on Zn(2+) as a cofactor.

It is found in the cytoplasm. It catalyses the reaction tRNA(Ala) + L-alanine + ATP = L-alanyl-tRNA(Ala) + AMP + diphosphate. Catalyzes the attachment of alanine to tRNA(Ala) in a two-step reaction: alanine is first activated by ATP to form Ala-AMP and then transferred to the acceptor end of tRNA(Ala). Also edits incorrectly charged Ser-tRNA(Ala) and Gly-tRNA(Ala) via its editing domain. The chain is Alanine--tRNA ligase from Gluconobacter oxydans (strain 621H) (Gluconobacter suboxydans).